The primary structure comprises 322 residues: Probable heme-iron transport system permease protein IsdF (322 aa).

Transmembrane regions (helical) follow at residues 9–29 (LLFL…FVTG), 61–81 (ILIA…LQAA), 89–109 (ANII…MLFI), 114–134 (FYLP…IILL), 143–163 (VSMI…LEIL), 179–199 (IWSD…LTLL), 233–253 (VFLA…GIIV), 267–287 (VLIP…DLLG), and 294–314 (LEIP…IYLI).

The protein belongs to the binding-protein-dependent transport system permease family. FecCD subfamily.

Its subcellular location is the cell membrane. Part of the binding-protein-dependent transport system for heme-iron. Responsible for the translocation of the substrate across the membrane. The polypeptide is Probable heme-iron transport system permease protein IsdF (isdF) (Staphylococcus aureus (strain MSSA476)).